Here is a 216-residue protein sequence, read N- to C-terminus: Cytidylate kinase (216 aa).

G11–T19 is an ATP binding site.

This sequence belongs to the cytidylate kinase family. Type 1 subfamily.

The protein resides in the cytoplasm. It catalyses the reaction CMP + ATP = CDP + ADP. The enzyme catalyses dCMP + ATP = dCDP + ADP. This is Cytidylate kinase from Mesorhizobium japonicum (strain LMG 29417 / CECT 9101 / MAFF 303099) (Mesorhizobium loti (strain MAFF 303099)).